Reading from the N-terminus, the 222-residue chain is Nudix hydrolase 11 (222 aa).

The Nudix hydrolase domain maps to 31-175; that stretch reads AKSSAVLVCL…EGERYLLQYF (145 aa). Positions 73-96 match the Nudix box motif; sequence GGKRDQEDKDDIATALREAREEIG. 2 residues coordinate Mg(2+): Glu90 and Glu94. The helical transmembrane segment at 186–204 threads the bilayer; that stretch reads FIIWALTAGILIRVASIVY.

This sequence belongs to the Nudix hydrolase family. PCD1 subfamily. Mn(2+) is required as a cofactor. Requires Mg(2+) as cofactor. In terms of tissue distribution, expressed in roots, stems and leaves.

The protein localises to the peroxisome membrane. Functionally, coenzyme A diphosphatase which mediates the cleavage of CoA into 3',5'-ADP from CoA and 4'-phosphopantetheine. Can use malonyl-CoA, hexanoyl-CoA, lauroyl-CoA, myristoyl-CoA and palmitoyl-CoA as substrates, but not isobutyryl-CoA or propionyl-CoA. The protein is Nudix hydrolase 11 (NUDT11) of Arabidopsis thaliana (Mouse-ear cress).